A 298-amino-acid chain; its full sequence is N-acetylmuramic acid 6-phosphate etherase (298 aa).

In terms of domain architecture, SIS spans 55-218; sequence AANRYKKGGR…STGVMIRQGK (164 aa). Glutamate 83 functions as the Proton donor in the catalytic mechanism. Glutamate 114 is a catalytic residue.

The protein belongs to the GCKR-like family. MurNAc-6-P etherase subfamily. Homodimer.

The enzyme catalyses N-acetyl-D-muramate 6-phosphate + H2O = N-acetyl-D-glucosamine 6-phosphate + (R)-lactate. Its pathway is amino-sugar metabolism; N-acetylmuramate degradation. Specifically catalyzes the cleavage of the D-lactyl ether substituent of MurNAc 6-phosphate, producing GlcNAc 6-phosphate and D-lactate. The sequence is that of N-acetylmuramic acid 6-phosphate etherase from Lactobacillus acidophilus (strain ATCC 700396 / NCK56 / N2 / NCFM).